The sequence spans 292 residues: MSMPATSTKTTKLATSLIDEYALLGWRAMLTEVNLSPKPGLVDRINCGAHKDMALEDFHRSALAIQGWLPRFIEFGACSAEMAPEEVLHGLRPIGMACEGDMFRATAGVNTHKGSIFSLGLLCAAIGRLLQLNQSVTPITICATAASFCRGLTDRELRTNNSQLTAGQRLYQQLGLTGARGEAEAGYPLVINHALPHYLTLLDQGLDPELALLDTLLLLMATNGDTNVASRGGEGGLRWLQREAQTLLNNGGIRTPADLDYLRQFDRECIERNISPGGSADLLILTWFLAQI.

The protein belongs to the CitG/MdcB family.

It carries out the reaction 3'-dephospho-CoA + ATP = 2'-(5''-triphospho-alpha-D-ribosyl)-3'-dephospho-CoA + adenine. Catalyzes the formation of 2-(5''-triphosphoribosyl)-3'-dephosphocoenzyme-A, the precursor of the prosthetic group of the holo-acyl carrier protein (gamma chain) of citrate lyase, from ATP and dephospho-CoA. In Escherichia coli (strain UTI89 / UPEC), this protein is 2-(5''-triphosphoribosyl)-3'-dephosphocoenzyme-A synthase.